The following is a 185-amino-acid chain: MVLAKDLKSGMTFLNGEKLLRVMEASHHKPGKGNTIMRMKLKDVRSGSTFDDTYRPEDKFEQAVIETVTAQYLYSMDDIANFMNNETYEQYEIPVEQVKDELLYVLENTDVKIQFYGTEVIGIQLPTTVVLEVTETQPSIKGATVTGSGKPATMETGLVVNVPDFVEVGTKLEINTQTGEYLKRA.

It belongs to the elongation factor P family.

The protein localises to the cytoplasm. It participates in protein biosynthesis; polypeptide chain elongation. Involved in peptide bond synthesis. Stimulates efficient translation and peptide-bond synthesis on native or reconstituted 70S ribosomes in vitro. Probably functions indirectly by altering the affinity of the ribosome for aminoacyl-tRNA, thus increasing their reactivity as acceptors for peptidyl transferase. The protein is Elongation factor P of Lactococcus lactis subsp. cremoris (strain MG1363).